The sequence spans 261 residues: 14-3-3 protein 9 (261 aa).

The tract at residues 239-261 is disordered; sequence PEDAEDAQKGDATNKAGGGEDAE.

Belongs to the 14-3-3 family. Homodimer.

This chain is 14-3-3 protein 9 (TFT9), found in Solanum lycopersicum (Tomato).